The sequence spans 374 residues: Low-specificity L-threonine aldolase (374 aa).

N6-(pyridoxal phosphate)lysine is present on lysine 213. The segment at 354–374 (HPHKDDGRNNKKMYSLDAIKK) is disordered.

The protein belongs to the threonine aldolase family. In terms of assembly, homotetramer. It depends on pyridoxal 5'-phosphate as a cofactor.

The enzyme catalyses L-threonine = acetaldehyde + glycine. The catalysed reaction is L-allo-threonine = acetaldehyde + glycine. It functions in the pathway amino-acid degradation; L-threonine degradation via aldolase pathway; acetaldehyde and glycine from L-threonine: step 1/1. The polypeptide is Low-specificity L-threonine aldolase (GLY1) (Candida albicans (Yeast)).